The following is a 229-amino-acid chain: Somatolactin (229 aa).

The signal sequence occupies residues 1–21 (MAALQEVLLAVLLWPVLVTIS). Disulfide bonds link cysteine 26–cysteine 36, cysteine 87–cysteine 203, and cysteine 220–cysteine 228. Asparagine 143 carries an N-linked (GlcNAc...) asparagine glycan.

This sequence belongs to the somatotropin/prolactin family. As to expression, pituitary gland.

The protein resides in the secreted. The sequence is that of Somatolactin from Tetraodon miurus (Congo puffer).